The following is a 215-amino-acid chain: ATP phosphoribosyltransferase (215 aa).

The protein belongs to the ATP phosphoribosyltransferase family. Short subfamily. In terms of assembly, heteromultimer composed of HisG and HisZ subunits.

The protein localises to the cytoplasm. It catalyses the reaction 1-(5-phospho-beta-D-ribosyl)-ATP + diphosphate = 5-phospho-alpha-D-ribose 1-diphosphate + ATP. The protein operates within amino-acid biosynthesis; L-histidine biosynthesis; L-histidine from 5-phospho-alpha-D-ribose 1-diphosphate: step 1/9. In terms of biological role, catalyzes the condensation of ATP and 5-phosphoribose 1-diphosphate to form N'-(5'-phosphoribosyl)-ATP (PR-ATP). Has a crucial role in the pathway because the rate of histidine biosynthesis seems to be controlled primarily by regulation of HisG enzymatic activity. The polypeptide is ATP phosphoribosyltransferase (Cyanothece sp. (strain PCC 7425 / ATCC 29141)).